A 297-amino-acid chain; its full sequence is MTEIIDGDAVAAQLRADLTGAVETLETAGVTPRLATVLMNDKQASETYVSMKQQDCEEVGIAAEDVRIDPEASADTLFDTVAELNAREDVHGILVQDPTPDHVPDERVLSAVDPAKDVDGFHPENVGKLVGGTPRFKPCTPHGVQKLLAHQGVDPDGAEVVVVGRSNIVGKPLANLLAQKAAGGNATVTICHSHTDDLAAHTRRADVVVAACGVPELIDGDMLSGDPVVIDVGINRVDADTEKGYELVGDVDYDSAEAAASAITPVPGGVGPMTRAMLLYNTLAAASEQTGVAVALP.

Residues 164-166 (GRS), Ser193, and Ile234 each bind NADP(+).

This sequence belongs to the tetrahydrofolate dehydrogenase/cyclohydrolase family. In terms of assembly, homodimer.

The enzyme catalyses (6R)-5,10-methylene-5,6,7,8-tetrahydrofolate + NADP(+) = (6R)-5,10-methenyltetrahydrofolate + NADPH. It catalyses the reaction (6R)-5,10-methenyltetrahydrofolate + H2O = (6R)-10-formyltetrahydrofolate + H(+). Its pathway is one-carbon metabolism; tetrahydrofolate interconversion. Functionally, catalyzes the oxidation of 5,10-methylenetetrahydrofolate to 5,10-methenyltetrahydrofolate and then the hydrolysis of 5,10-methenyltetrahydrofolate to 10-formyltetrahydrofolate. This Halobacterium salinarum (strain ATCC 700922 / JCM 11081 / NRC-1) (Halobacterium halobium) protein is Bifunctional protein FolD.